We begin with the raw amino-acid sequence, 65 residues long: Large ribosomal subunit protein uL30 (65 aa).

It belongs to the universal ribosomal protein uL30 family. As to quaternary structure, part of the 50S ribosomal subunit.

The protein is Large ribosomal subunit protein uL30 of Onion yellows phytoplasma (strain OY-M).